The primary structure comprises 245 residues: tRNA pseudouridine synthase A 2 (245 aa).

The active-site Nucleophile is Asp-53. Tyr-111 is a substrate binding site.

The protein belongs to the tRNA pseudouridine synthase TruA family. As to quaternary structure, homodimer.

The enzyme catalyses uridine(38/39/40) in tRNA = pseudouridine(38/39/40) in tRNA. In terms of biological role, formation of pseudouridine at positions 38, 39 and 40 in the anticodon stem and loop of transfer RNAs. The sequence is that of tRNA pseudouridine synthase A 2 from Bacillus cereus (strain ATCC 10987 / NRS 248).